Here is a 332-residue protein sequence, read N- to C-terminus: MRRSFFCIDSHTCGNPVRVVAGGGPLLPHVSMAERREIFVRDHDWVRKALMFEPRGHDIMSGAIIYPSVREDCDFAALFIEVSGCLPMCGAGTIGLATVAIEEGLITPRVPGRLSIETPAGKVDVDYQLKDGFVEAVRLFNVASYLHSRDVVVDVSGLGSLSVDIAYGGNFYAVIEPQENWSGLDGMSASDIVTLSQRLRDALSVVCDPVHPDDERIRGVHHAIWCDAAGSENADGRGAVFYGDKAIDRSPGGTGTSARMAQLYGRGRLGIGDSFRNESLIGTVFEGRIEGAALVGGIPGILPSIGGWARVIGHNTIFVDERDPLAHGFQIR.

C89 functions as the Proton acceptor in the catalytic mechanism. Substrate contacts are provided by residues H222, D248, and 253–254 (GT).

Belongs to the proline racemase family.

The enzyme catalyses trans-4-hydroxy-L-proline = cis-4-hydroxy-D-proline. Catalyzes the epimerization of trans-4-hydroxy-L-proline (t4LHyp) to cis-4-hydroxy-D-proline (c4DHyp). Is likely involved in a degradation pathway that converts t4LHyp to alpha-ketoglutarate. Displays no proline racemase activity. This chain is 4-hydroxyproline 2-epimerase 2, found in Rhizobium rhizogenes (strain K84 / ATCC BAA-868) (Agrobacterium radiobacter).